The following is a 428-amino-acid chain: Enolase (428 aa).

Position 163 (Gln-163) interacts with (2R)-2-phosphoglycerate. Glu-205 acts as the Proton donor in catalysis. Residues Asp-242, Glu-286, and Asp-313 each coordinate Mg(2+). Residues Lys-338, Arg-367, Ser-368, and Lys-389 each coordinate (2R)-2-phosphoglycerate. The active-site Proton acceptor is the Lys-338.

Belongs to the enolase family. It depends on Mg(2+) as a cofactor.

Its subcellular location is the cytoplasm. It is found in the secreted. The protein resides in the cell surface. The enzyme catalyses (2R)-2-phosphoglycerate = phosphoenolpyruvate + H2O. It functions in the pathway carbohydrate degradation; glycolysis; pyruvate from D-glyceraldehyde 3-phosphate: step 4/5. Catalyzes the reversible conversion of 2-phosphoglycerate (2-PG) into phosphoenolpyruvate (PEP). It is essential for the degradation of carbohydrates via glycolysis. The sequence is that of Enolase from Lactobacillus acidophilus (strain ATCC 700396 / NCK56 / N2 / NCFM).